A 140-amino-acid polypeptide reads, in one-letter code: Holo-[acyl-carrier-protein] synthase (140 aa).

Positions 7 and 58 each coordinate Mg(2+).

The protein belongs to the P-Pant transferase superfamily. AcpS family. The cofactor is Mg(2+).

It localises to the cytoplasm. The catalysed reaction is apo-[ACP] + CoA = holo-[ACP] + adenosine 3',5'-bisphosphate + H(+). Transfers the 4'-phosphopantetheine moiety from coenzyme A to a Ser of acyl-carrier-protein. The protein is Holo-[acyl-carrier-protein] synthase of Chloroflexus aggregans (strain MD-66 / DSM 9485).